Reading from the N-terminus, the 325-residue chain is Thiamine-monophosphate kinase (325 aa).

Aspartate 30, serine 45, threonine 46, and aspartate 47 together coordinate Mg(2+). Histidine 54 is a binding site for substrate. Mg(2+) is bound by residues aspartate 75 and aspartate 122. ATP is bound by residues 121–122 and arginine 146; that span reads GD. Aspartate 212 is a Mg(2+) binding site. Residue serine 214 participates in ATP binding. Aspartate 215 provides a ligand contact to Mg(2+). Substrate-binding residues include glutamate 263 and tyrosine 319.

This sequence belongs to the thiamine-monophosphate kinase family.

The enzyme catalyses thiamine phosphate + ATP = thiamine diphosphate + ADP. It participates in cofactor biosynthesis; thiamine diphosphate biosynthesis; thiamine diphosphate from thiamine phosphate: step 1/1. Catalyzes the ATP-dependent phosphorylation of thiamine-monophosphate (TMP) to form thiamine-pyrophosphate (TPP), the active form of vitamin B1. This chain is Thiamine-monophosphate kinase, found in Escherichia coli O157:H7.